The chain runs to 308 residues: MNFQQLRFVREAVRQNMNLTEVANVLYTSQSGVSKQIKDLEDELGVDIFIRRGKRLTGLTEPGKAVHQLIERMLLDAENLRRVARQFADQDSGHLVVATTHTQARYALPKVIRQFTDVFPKVHLALRQGSPQQIAQMILNGEADLGISTEALDRYPDIVTFPCYSWHHTVVVPKGHPLVGRENLTLEEIAEYPIITYDQDFTGRSHIDQAFTQAGAVPDVVLTAIDADVIKTYVELGMGIGVVAAMAYDPQRDTGLVALDTQHLFEASTTRVGLRKGAFLRAYAYRLIEMFAPHLNEAEIAGLLREAV.

The HTH lysR-type domain maps to 1–59; sequence MNFQQLRFVREAVRQNMNLTEVANVLYTSQSGVSKQIKDLEDELGVDIFIRRGKRLTGL. A DNA-binding region (H-T-H motif) is located at residues 19–38; the sequence is LTEVANVLYTSQSGVSKQIK.

Belongs to the LysR transcriptional regulatory family.

Transcriptional regulator that is essential for the utilization of a number of organic sulfur sources of either environmental or human origin. Required for aliphatic sulfonate utilization. Binds to DNA at target promoter regions. Targets include the ssuDBC operon, the tauABC operon, three tauD-type genes and atsA. The protein is HTH-type transcriptional regulator SsuR of Burkholderia cenocepacia (strain ATCC BAA-245 / DSM 16553 / LMG 16656 / NCTC 13227 / J2315 / CF5610) (Burkholderia cepacia (strain J2315)).